The following is a 483-amino-acid chain: MFS-type transporter hepF (483 aa).

The tract at residues Met1–Asp31 is disordered. The segment covering Lys7–Glu17 has biased composition (basic and acidic residues). 11 consecutive transmembrane segments (helical) span residues Thr89–Ile109, Ile124–Val144, Phe147–Leu167, Phe179–Thr199, Trp206–Thr226, Pro276–Val296, Ile311–Ile331, Pro357–Val377, Met385–Val405, Ala416–Leu436, and Gly448–Ile468.

It belongs to the major facilitator superfamily.

Its subcellular location is the cell membrane. In terms of biological role, MFS-type transporter; part of the gene cluster that mediates the biosynthesis of heptelidic acid (HA), a sesquiterpene lactone that acts as an inhibitor of glyceraldehyde-3-phosphatedehydrogenase (GAPDH) and a growth inhibitor of the salt-tolerant lactic acid bacteria in soy sauce brewing. Might be required for efficient secretion of heptelidic acid. The protein is MFS-type transporter hepF (hepF) of Aspergillus oryzae (strain ATCC 42149 / RIB 40) (Yellow koji mold).